The chain runs to 563 residues: DNA repair protein rhp7 (563 aa).

Residues 1–101 (MSSGSRVRGP…TDEEAEDNED (101 aa)) are disordered. The segment covering 39–59 (ESAGQSTGTESEVIQTPTSVE) has biased composition (polar residues). A compositionally biased stretch (basic residues) spans 78–90 (VKRRNLRNQKKKK).

The protein belongs to the RAD7 family.

It is found in the nucleus. Its function is as follows. Involved in global genome repair (GGR) via nucleotide excision repair (NER), in conjunction with rhp16, after UV irradiation. This Schizosaccharomyces pombe (strain 972 / ATCC 24843) (Fission yeast) protein is DNA repair protein rhp7 (rhp7).